A 380-amino-acid chain; its full sequence is MQFLSDTQRMVLSRAVCASFFFFHVAVAAYTARVQEMAMRGFALRNFQQVHAYFEQHIPLLSSFTEKKEALSLFAQYLELHDAHERAAHRYRDAALYALGTERVQFLLEATRNAMAADAREYARETLAEVEHIGVQVLNKKQHATFLVYHVWLALHAASTAAHLHEQLERLEEYGTQGVFNVFETVLLFTRWWITQDEKVAQRLTERYPQSFEALSVIGAVEIAPSVFWHLMPRAYGEAVESMGKSETVVLQDAKLRPVPEVVAAHRTRRAHVAADGTAARSAMSSSHNLGVSILEGGVSVPDEVGAGDEKPRGYQLGFFRAKENAQRLMDDLERRGFGFQLHTVRRADAVYYQVFVPEDDSGFVGHRLKDAGYETFPLF.

A signal peptide spans 1–28 (MQFLSDTQRMVLSRAVCASFFFFHVAVA). The region spanning 307-380 (AGDEKPRGYQ…DAGYETFPLF (74 aa)) is the SPOR domain.

This is an uncharacterized protein from Treponema pallidum (strain Nichols).